Here is an 896-residue protein sequence, read N- to C-terminus: Glutamate receptor 2.4 (896 aa).

An N-terminal signal peptide occupies residues 1-24; sequence MKRHLNDVVLVFLVFIFGVKLGKG. The Extracellular segment spans residues 25-565; sequence QNTTIQVINV…SSLIFFKPLT (541 aa). Asn-26, Asn-46, Asn-53, Asn-204, Asn-267, Asn-331, Asn-341, and Asn-527 each carry an N-linked (GlcNAc...) asparagine glycan. Residues 566-586 form a helical membrane-spanning segment; it reads PGLWGMTLGSFFVVGFVVWIL. Residues 587–595 are Cytoplasmic-facing; it reads EHRVNSEFT. The chain crosses the membrane as a helical span at residues 596 to 616; the sequence is GPPQYQISTMFWFAFSIMVFA. Residues 617–620 are Cytoplasmic-facing; the sequence is PRER. Residues 621–641 traverse the membrane as a helical segment; it reads VMSFTARVVVITWYFIVLVLT. At 642-815 the chain is on the extracellular side; that stretch reads QSYTASLSSL…VSFRKLSLDS (174 aa). A helical transmembrane segment spans residues 816 to 836; the sequence is FLLLFVAAATVCTLALLKFVI. Residues 837–896 lie on the Cytoplasmic side of the membrane; it reads CFLIQNRIILNDEFYRGKRMKEMWLKFMESDGESYISRVRSTCPQVLIQPREEDIDPING.

The protein belongs to the glutamate-gated ion channel (TC 1.A.10.1) family. In terms of assembly, may form heteromers. Expressed predominantly in roots.

It localises to the membrane. In terms of biological role, glutamate-gated receptor that probably acts as a non-selective cation channel. May be involved in light-signal transduction and calcium homeostasis via the regulation of calcium influx into cells. The polypeptide is Glutamate receptor 2.4 (GLR2.4) (Arabidopsis thaliana (Mouse-ear cress)).